The primary structure comprises 212 residues: uncharacterized protein (212 aa).

2 helical membrane passes run 54 to 74 (LCFALTLLLTLGGTISAGYAG) and 79 to 99 (WIICGIGLGIIVLTLILALLL).

The protein localises to the cell membrane. This is an uncharacterized protein from Chlamydia pneumoniae (Chlamydophila pneumoniae).